The following is a 178-amino-acid chain: MSNVRVSNGSPSLERMDARQAEYPKPSACRNLFGPVNHEELTRDLEKHRRDMEEASQRKWNFDFQNHKPLEGKYEWQEVEKGSLPEFYYRPPRPPKGACKVPAQESQDVSGTRQAVPLMGSQANSEDTHLVDQKTDTADNQAGLAEQCTGIRKRPATDDSSPQNKRANRTEENVSDGS.

Positions 1-11 (MSNVRVSNGSP) are enriched in polar residues. Residues 1-31 (MSNVRVSNGSPSLERMDARQAEYPKPSACRN) are disordered. The residue at position 10 (Ser10) is a Phosphoserine; by UHMK1. Positions 51–91 (DMEEASQRKWNFDFQNHKPLEGKYEWQEVEKGSLPEFYYRP) are interaction with CDK2. The residue at position 74 (Tyr74) is a Phosphotyrosine; by SRC. Residues 87-178 (FYYRPPRPPK…RTEENVSDGS (92 aa)) form a disordered region. Tyr88 is subject to Phosphotyrosine; by ABL, LYN, SRC and JAK2. Tyr89 carries the phosphotyrosine modification. Residues 104-113 (QESQDVSGTR) show a composition bias toward polar residues. Positions 126–137 (EDTHLVDQKTDT) are enriched in basic and acidic residues. The short motif at 153-169 (KRPATDDSSPQNKRANR) is the Nuclear localization signal element. Thr157 is modified (phosphothreonine; by CaMK1, PKB/AKT1, RPS6KA1, RPS6KA3 and PIM1). Thr170 is subject to Phosphothreonine.

This sequence belongs to the CDI family. Forms a ternary complex composed of CCNE1, CDK2 and CDKN1B. Interacts directly with CCNE1; the interaction is inhibited by CDK2-dependent phosphorylation. Interacts with COPS5, subunit of the COP9 signalosome complex; the interaction leads to CDKN1B degradation. Interacts with NUP50; the interaction leads to nuclear import and degradation of phosphorylated CDKN1B. Interacts with CCND1 and SNX6. Interacts (Thr-198-phosphorylated form) with 14-3-3 proteins, binds strongly YWHAQ, weakly YWHAE and YWHAH, but not YWHAB nor YWHAZ; the interaction with YWHAQ results in translocation to the cytoplasm. Interacts with AKT1 and LYN; the interactions lead to cytoplasmic mislocation, phosphorylation of CDKN1B and inhibition of cell cycle arrest. Forms a ternary complex with CCNA2 and CDK2; CDKN1B inhibits the kinase activity of CDK2 through conformational rearrangements. Interacts (unphosphorylated form) with CDK2. Forms a complex with CDK2 and SPDYA, but does not directly interact with SPDYA. Forms a ternary complex composed of cyclin D, CDK4 and CDKN1B. Interacts (phosphorylated on Tyr-88 and Tyr-89) with CDK4; the interaction is required for cyclin D and CDK4 complex assembly, induces nuclear translocation and activates the CDK4 kinase activity. Interacts with GRB2. Interacts with PIM1. Identified in a complex with SKP1, SKP2 and CKS1B. Interacts with UHMK1; the interaction leads to cytoplasmic mislocation, phosphorylation of CDKN1B and inhibition of cell cycle arrest. Also interacts with CDK1. Dephosphorylated by PPM1H, leading to CDKN1B stability. Post-translationally, phosphorylated; phosphorylation occurs on serine, threonine and tyrosine residues. Phosphorylation on Ser-10 is the major site of phosphorylation in resting cells, takes place at the G(0)-G(1) phase and leads to protein stability. Phosphorylation on other sites is greatly enhanced by mitogens, growth factors, MYC and in certain cancer cell lines. The phosphorylated form found in the cytoplasm is inactivate. Phosphorylation on Tyr-88 has no effect on binding CDK complexes. In terms of processing, ubiquitinated; in the cytoplasm by the KPC complex (composed of RNF123/KPC1 and UBAC1/KPC2) and, in the nucleus, by SCF(SKP2). The latter requires prior phosphorylation on Thr-187. Ubiquitinated; by a TRIM21-containing SCF(SKP2)-like complex; leads to its degradation. Subject to degradation in the lysosome. Interaction with SNX6 promotes lysosomal degradation.

It localises to the nucleus. The protein resides in the cytoplasm. The protein localises to the endosome. In terms of biological role, important regulator of cell cycle progression. Inhibits the kinase activity of CDK2 bound to cyclin A, but has little inhibitory activity on CDK2 bound to SPDYA. Involved in G1 arrest. Potent inhibitor of cyclin E- and cyclin A-CDK2 complexes. Forms a complex with cyclin type D-CDK4 complexes and is involved in the assembly, stability, and modulation of CCND1-CDK4 complex activation. Acts either as an inhibitor or an activator of cyclin type D-CDK4 complexes depending on its phosphorylation state and/or stoichometry. This is Cyclin-dependent kinase inhibitor 1B (CDKN1B) from Neovison vison (American mink).